Reading from the N-terminus, the 1403-residue chain is DNA-directed RNA polymerase subunit beta' (1403 aa).

Zn(2+) is bound by residues cysteine 70, cysteine 72, cysteine 85, and cysteine 88. Residues aspartate 461, aspartate 463, and aspartate 465 each coordinate Mg(2+). The Zn(2+) site is built by cysteine 816, cysteine 890, cysteine 897, and cysteine 900.

The protein belongs to the RNA polymerase beta' chain family. In terms of assembly, the RNAP catalytic core consists of 2 alpha, 1 beta, 1 beta' and 1 omega subunit. When a sigma factor is associated with the core the holoenzyme is formed, which can initiate transcription. It depends on Mg(2+) as a cofactor. Zn(2+) is required as a cofactor.

The enzyme catalyses RNA(n) + a ribonucleoside 5'-triphosphate = RNA(n+1) + diphosphate. Functionally, DNA-dependent RNA polymerase catalyzes the transcription of DNA into RNA using the four ribonucleoside triphosphates as substrates. The protein is DNA-directed RNA polymerase subunit beta' of Dechloromonas aromatica (strain RCB).